Reading from the N-terminus, the 101-residue chain is Integration host factor subunit alpha (101 aa).

This sequence belongs to the bacterial histone-like protein family. As to quaternary structure, heterodimer of an alpha and a beta chain.

This protein is one of the two subunits of integration host factor, a specific DNA-binding protein that functions in genetic recombination as well as in transcriptional and translational control. This Alkalilimnicola ehrlichii (strain ATCC BAA-1101 / DSM 17681 / MLHE-1) protein is Integration host factor subunit alpha.